Here is a 1164-residue protein sequence, read N- to C-terminus: Integrin alpha-5 (1164 aa).

Residues 1–14 (MREEGGGSREKEGE) show a composition bias toward basic and acidic residues. The interval 1-119 (MREEGGGSRE…MGSRTPGSPL (119 aa)) is disordered. Residues 81–90 (LLPALSHSPL) are compositionally biased toward low complexity. Residues 156–221 (NLDAEAPAVL…CPWGTSPAQC (66 aa)) form an FG-GAP 1 repeat. A glycan (N-linked (GlcNAc...) asparagine) is linked at Asn197. A disulfide bridge connects residues Cys212 and Cys221. A Phosphoserine modification is found at Ser240. FG-GAP repeat units follow at residues 241 to 301 (SEGE…QILE), 306 to 358 (RSDF…AESY), 372 to 424 (QTRQ…GSDI), 425 to 490 (RSLY…GMEP), 491 to 550 (TPTL…GLAS), and 554 to 617 (QVLL…IFPA). Cys269 and Cys289 are oxidised to a cystine. N-linked (GlcNAc...) asparagine glycosylation is present at Asn295. Cys305 and Cys318 are oxidised to a cystine. 2 residues coordinate a protein: Gln375 and Asp382. Ca(2+) contacts are provided by Glu393, Ser395, Asp397, and Asp401. Asn410, Asn420, and Asn429 each carry an N-linked (GlcNAc...) asparagine glycan. Asp447, Asn449, Asp451, Leu453, Asp455, Asp514, Asp516, Asp518, Tyr520, Asp522, Asp578, Asp580, Asn582, Tyr584, and Asp586 together coordinate Ca(2+). Cys626 and Cys635 are oxidised to a cystine. 4 N-linked (GlcNAc...) asparagine glycosylation sites follow: Asn637, Asn643, Asn706, and Asn722. A disulfide bridge connects residues Cys641 and Cys697. Cysteines 758 and 764 form a disulfide. N-linked (GlcNAc...) asparagine glycans are attached at residues Asn788, Asn825, Asn837, Asn886, and Asn982. An intrachain disulfide couples Cys831 to Cys844. 3 cysteine pairs are disulfide-bonded: Cys962/Cys1072, Cys983/Cys1036, and Cys1026/Cys1031. Residues 983–1022 (CTTSHPPNPEGLELDPEGSQHHRLQRRDVPGRSPASSGPQ) form a disordered region. Residues 1114–1134 (LWIIILAILIGLLLLGLLIYI) form a helical membrane-spanning segment. The Cytoplasmic segment spans residues 1135-1164 (LYKLGFFKRSLPYGTAMEKAQLKPPATSDA). The tract at residues 1136 to 1143 (YKLGFFKR) is interaction with HPS5. The short motif at 1139–1143 (GFFKR) is the GFFKR motif element.

The protein belongs to the integrin alpha chain family. In terms of assembly, heterodimer of an alpha and a beta subunit. The alpha subunit is composed of a heavy and a light chain linked by a disulfide bond. Alpha-5 associates with beta-1. Interacts with NISCH. Interacts with HPS5. Interacts with RAB21 and COMP. Interacts with CIB1. ITGA5:ITGB1 interacts with CCN3. ITGA5:ITGB1 interacts with FBN1. ITGA5:ITGB1 interacts with IL1B. ITGA5:ITGB1 interacts with ACE2. ITGA5:ITGB1 interacts with SELP. Interacts with ANGPT2. ITGA5:ITGB1 interacts with IGFBP2. ITGA5:ITGB1 interacts with IGFBP1. Proteolytic cleavage by PCSK5 mediates activation of the precursor.

It localises to the cell membrane. The protein localises to the cell junction. Its subcellular location is the focal adhesion. Integrin alpha-5/beta-1 (ITGA5:ITGB1) is a receptor for fibronectin and fibrinogen. It recognizes the sequence R-G-D in its ligands. ITGA5:ITGB1 binds to PLA2G2A via a site (site 2) which is distinct from the classical ligand-binding site (site 1) and this induces integrin conformational changes and enhanced ligand binding to site 1. ITGA5:ITGB1 acts as a receptor for fibrillin-1 (FBN1) and mediates R-G-D-dependent cell adhesion to FBN1. ITGA5:ITGB1 acts as a receptor for fibronectin (FN1) and mediates R-G-D-dependent cell adhesion to FN1. ITGA5:ITGB1 is a receptor for IL1B and binding is essential for IL1B signaling. ITGA5:ITGB3 is a receptor for soluble CD40LG and is required for CD40/CD40LG signaling. The protein is Integrin alpha-5 (ITGA5) of Bos taurus (Bovine).